Reading from the N-terminus, the 163-residue chain is MFLMVSGFINYSQQTVRAARYIGQGFTITLSHANRLPVTIQYPYEKIISSERFRGRIHFEFDKCIACEVCVRVCPIDLPVVDWKLETDIRKKQLLNYSIDFGICIFCGNCIEYCPTNCLSMTEEYELSTYDRHELNYNQIALGRLPVSVIDDYTIRTIQIKFN.

4Fe-4S ferredoxin-type domains lie at G55–K84 and L95–E124. [4Fe-4S] cluster is bound by residues C64, C67, C70, C74, C104, C107, C110, and C114.

Belongs to the complex I 23 kDa subunit family. As to quaternary structure, NDH is composed of at least 16 different subunits, 5 of which are encoded in the nucleus. It depends on [4Fe-4S] cluster as a cofactor.

The protein resides in the plastid. Its subcellular location is the chloroplast thylakoid membrane. The enzyme catalyses a plastoquinone + NADH + (n+1) H(+)(in) = a plastoquinol + NAD(+) + n H(+)(out). It carries out the reaction a plastoquinone + NADPH + (n+1) H(+)(in) = a plastoquinol + NADP(+) + n H(+)(out). Its function is as follows. NDH shuttles electrons from NAD(P)H:plastoquinone, via FMN and iron-sulfur (Fe-S) centers, to quinones in the photosynthetic chain and possibly in a chloroplast respiratory chain. The immediate electron acceptor for the enzyme in this species is believed to be plastoquinone. Couples the redox reaction to proton translocation, and thus conserves the redox energy in a proton gradient. The protein is NAD(P)H-quinone oxidoreductase subunit I, chloroplastic of Glycine max (Soybean).